The following is a 51-amino-acid chain: Large ribosomal subunit protein bL33 (51 aa).

Belongs to the bacterial ribosomal protein bL33 family.

The polypeptide is Large ribosomal subunit protein bL33 (Pseudoalteromonas translucida (strain TAC 125)).